A 283-amino-acid polypeptide reads, in one-letter code: NAD kinase (283 aa).

Residue Asp61 is the Proton acceptor of the active site. Residues 61-62 (DG), 134-135 (ND), Arg145, Asp164, 175-180 (TAYNLS), and Gln234 contribute to the NAD(+) site.

The protein belongs to the NAD kinase family. A divalent metal cation is required as a cofactor.

It localises to the cytoplasm. The enzyme catalyses NAD(+) + ATP = ADP + NADP(+) + H(+). In terms of biological role, involved in the regulation of the intracellular balance of NAD and NADP, and is a key enzyme in the biosynthesis of NADP. Catalyzes specifically the phosphorylation on 2'-hydroxyl of the adenosine moiety of NAD to yield NADP. The sequence is that of NAD kinase from Clostridium kluyveri (strain NBRC 12016).